A 548-amino-acid chain; its full sequence is Membrane protein insertase YidC (548 aa).

Residues 6 to 26 (NLLVIALLFVSFMIWQAWEQD) traverse the membrane as a helical segment. Positions 28–55 (NPQPQAQQTTQTTTTAAGSAADQGVPAS) are disordered. Over residues 30–50 (QPQAQQTTQTTTTAAGSAADQ) the composition is skewed to low complexity. 4 helical membrane-spanning segments follow: residues 350 to 370 (FVGNWGFSIIIITFIVRGIMY), 420 to 440 (LGGCFPLLIQMPIFLALYYML), 458 to 478 (LSAQDPYYILPILMGVTMFFI), and 499 to 519 (PVIFTVFFLWFPSGLVLYYIV).

It belongs to the OXA1/ALB3/YidC family. Type 1 subfamily. As to quaternary structure, interacts with the Sec translocase complex via SecD. Specifically interacts with transmembrane segments of nascent integral membrane proteins during membrane integration.

The protein localises to the cell inner membrane. Its function is as follows. Required for the insertion and/or proper folding and/or complex formation of integral membrane proteins into the membrane. Involved in integration of membrane proteins that insert both dependently and independently of the Sec translocase complex, as well as at least some lipoproteins. Aids folding of multispanning membrane proteins. The sequence is that of Membrane protein insertase YidC from Escherichia fergusonii (strain ATCC 35469 / DSM 13698 / CCUG 18766 / IAM 14443 / JCM 21226 / LMG 7866 / NBRC 102419 / NCTC 12128 / CDC 0568-73).